Reading from the N-terminus, the 127-residue chain is MFRTMMNGKIHRATVTEANLNYVGSITIDSAILEAVDMLPNEKVQIVNNNNGARIETYIIPGEPGSGVICLNGAAARHVQVGDVVIIMSYGMFTSEEAKTHEPKIVVLDEKNHIEMILPEEKAHTTL.

Residue S25 is the Schiff-base intermediate with substrate; via pyruvic acid of the active site. Residue S25 is modified to Pyruvic acid (Ser). T57 contributes to the substrate binding site. Y58 acts as the Proton donor in catalysis. 73-75 lines the substrate pocket; that stretch reads GAA.

The protein belongs to the PanD family. Heterooctamer of four alpha and four beta subunits. Pyruvate is required as a cofactor. Post-translationally, is synthesized initially as an inactive proenzyme, which is activated by self-cleavage at a specific serine bond to produce a beta-subunit with a hydroxyl group at its C-terminus and an alpha-subunit with a pyruvoyl group at its N-terminus.

Its subcellular location is the cytoplasm. It carries out the reaction L-aspartate + H(+) = beta-alanine + CO2. It functions in the pathway cofactor biosynthesis; (R)-pantothenate biosynthesis; beta-alanine from L-aspartate: step 1/1. Catalyzes the pyruvoyl-dependent decarboxylation of aspartate to produce beta-alanine. In Listeria innocua serovar 6a (strain ATCC BAA-680 / CLIP 11262), this protein is Aspartate 1-decarboxylase.